We begin with the raw amino-acid sequence, 444 residues long: Probable glycine dehydrogenase (decarboxylating) subunit 1 (444 aa).

The protein belongs to the GcvP family. N-terminal subunit subfamily. In terms of assembly, the glycine cleavage system is composed of four proteins: P, T, L and H. In this organism, the P 'protein' is a heterodimer of two subunits.

The enzyme catalyses N(6)-[(R)-lipoyl]-L-lysyl-[glycine-cleavage complex H protein] + glycine + H(+) = N(6)-[(R)-S(8)-aminomethyldihydrolipoyl]-L-lysyl-[glycine-cleavage complex H protein] + CO2. The glycine cleavage system catalyzes the degradation of glycine. The P protein binds the alpha-amino group of glycine through its pyridoxal phosphate cofactor; CO(2) is released and the remaining methylamine moiety is then transferred to the lipoamide cofactor of the H protein. In Carboxydothermus hydrogenoformans (strain ATCC BAA-161 / DSM 6008 / Z-2901), this protein is Probable glycine dehydrogenase (decarboxylating) subunit 1.